The primary structure comprises 613 residues: Secretogranin-2 (613 aa).

The signal sequence occupies residues 1 to 27 (MAEAKTHWLGAVLSLIPLIFLLSEAEA). Positions 28 to 30 (ASF) are excised as a propeptide. Disordered stretches follow at residues 67-105 (QQAH…DSLS) and 119-146 (QAEN…PMDM). Over residues 92 to 105 (ENGDLPESSRDSLS) the composition is skewed to basic and acidic residues. Residue Tyr150 is modified to Sulfotyrosine. Phosphoserine occurs at positions 173, 267, 428, 528, 551, and 552. A compositionally biased stretch (basic and acidic residues) spans 257-283 (ESQTQEEVRDSKENADKTEQINDEMKR). Residues 257–287 (ESQTQEEVRDSKENADKTEQINDEMKRSGQL) are disordered. Residues 546–557 (HLSQHSSQETDK) show a composition bias toward basic and acidic residues. The interval 546–580 (HLSQHSSQETDKLASVSKRLPVGTPKSDDTPNRPY) is disordered.

The protein belongs to the chromogranin/secretogranin protein family. Interacts with Secretogranin III/SCG3. Highest levels detected in anterior pituitary followed by adrenal medulla and posterior pituitary (at protein level). In the brain, high levels are found in the hypothalamus, comparable to those present in posterior pituitary with two- to six-fold lower levels present in the other brain regions investigated including caudate nucleus, hippocampus, thalamus and brainstem (at protein level).

It localises to the secreted. Its function is as follows. Neuroendocrine protein of the granin family that regulates the biogenesis of secretory granules. In Bos taurus (Bovine), this protein is Secretogranin-2 (SCG2).